Consider the following 367-residue polypeptide: Histidinol-phosphate aminotransferase (367 aa).

An N6-(pyridoxal phosphate)lysine modification is found at lysine 221.

Belongs to the class-II pyridoxal-phosphate-dependent aminotransferase family. Histidinol-phosphate aminotransferase subfamily. In terms of assembly, homodimer. Pyridoxal 5'-phosphate serves as cofactor.

The enzyme catalyses L-histidinol phosphate + 2-oxoglutarate = 3-(imidazol-4-yl)-2-oxopropyl phosphate + L-glutamate. The protein operates within amino-acid biosynthesis; L-histidine biosynthesis; L-histidine from 5-phospho-alpha-D-ribose 1-diphosphate: step 7/9. The polypeptide is Histidinol-phosphate aminotransferase (Paracoccus denitrificans (strain Pd 1222)).